We begin with the raw amino-acid sequence, 587 residues long: MTTRVTGNERRGRQLLLRFSGFLSAALTVMALITATRALAPVVAYIAPQRVRSHFMRRAFASGNCRSRRFSVLRSTVGTETRNENNITTPYHSPLPTSRYVYQSSRTLSSRNPALPLESTLMHSNANELTDVELKNLVAHWRDHPVLNPMVTFRSWVVPIKGKMIQAILNSKSLQPYLASRHELLQEMHVRLKIVRDYTDSTDGTEKLILLHPDTPPLSELPADVQQLLRNCQIHENGPVMPTKFTYKDFTASYILSQLLPIAVHPPPTAFETIGHVAHLNLKERHWPYRFLIGQVLLETLPLIESVINKVGEVSGPYRTYDFGLLAGRNDTRVKLTESGVQLQFDLADVYWCSRLSEERQRLLRTFQPGQIIADPFCGVGALCLLAASLPQRNCTIWANDWNPKAVEYLRENARRNHVSDRIERLQCGDAYDFLMDMGLQQHQKASTRSRKEDVTNKDGNHVTPTEPMRLPDHVVMNYPVEAPKFLGALRWWPVPPSSRRGSTTRDGGIGSVIVPRVHVYTFARADPTTDRDAEEVAVDLVAANLLPLGNTIHCRTEMNEDYDCDIQVHPVRDVAPGKVVLCGDFR.

Residues Arg-360 and 430-431 (DA) each bind S-adenosyl-L-methionine. Residues 446–469 (ASTRSRKEDVTNKDGNHVTPTEPM) are disordered. Over residues 450–461 (SRKEDVTNKDGN) the composition is skewed to basic and acidic residues. Asn-478 lines the S-adenosyl-L-methionine pocket.

This sequence belongs to the class I-like SAM-binding methyltransferase superfamily. TRM5/TYW2 family. Monomer.

It is found in the mitochondrion matrix. The protein resides in the nucleus. It localises to the cytoplasm. It catalyses the reaction guanosine(37) in tRNA + S-adenosyl-L-methionine = N(1)-methylguanosine(37) in tRNA + S-adenosyl-L-homocysteine + H(+). Specifically methylates the N1 position of guanosine-37 in various cytoplasmic and mitochondrial tRNAs. Methylation is not dependent on the nature of the nucleoside 5' of the target nucleoside. This is the first step in the biosynthesis of wybutosine (yW), a modified base adjacent to the anticodon of tRNAs and required for accurate decoding. The polypeptide is tRNA (guanine(37)-N(1))-methyltransferase 2 (Phaeodactylum tricornutum (strain CCAP 1055/1)).